We begin with the raw amino-acid sequence, 252 residues long: tRNA (guanine-N(1)-)-methyltransferase (252 aa).

Residues G113 and 133-138 (LGDYVL) contribute to the S-adenosyl-L-methionine site.

It belongs to the RNA methyltransferase TrmD family. In terms of assembly, homodimer.

Its subcellular location is the cytoplasm. It carries out the reaction guanosine(37) in tRNA + S-adenosyl-L-methionine = N(1)-methylguanosine(37) in tRNA + S-adenosyl-L-homocysteine + H(+). Functionally, specifically methylates guanosine-37 in various tRNAs. This chain is tRNA (guanine-N(1)-)-methyltransferase, found in Stenotrophomonas maltophilia (strain K279a).